Reading from the N-terminus, the 372-residue chain is Putative F-box/kelch-repeat protein At3g22730 (372 aa).

The F-box domain occupies M1–A50. 3 Kelch repeats span residues I155–G204, A245–G293, and K324–E372.

The protein is Putative F-box/kelch-repeat protein At3g22730 of Arabidopsis thaliana (Mouse-ear cress).